Reading from the N-terminus, the 443-residue chain is tRNA-2-methylthio-N(6)-dimethylallyladenosine synthase (443 aa).

Residues Ser-3 to Arg-120 form the MTTase N-terminal domain. [4Fe-4S] cluster contacts are provided by Cys-12, Cys-49, Cys-83, Cys-157, Cys-161, and Cys-164. The Radical SAM core domain occupies Arg-143–Ala-375. Residues Gln-378–Asp-441 enclose the TRAM domain.

It belongs to the methylthiotransferase family. MiaB subfamily. As to quaternary structure, monomer. It depends on [4Fe-4S] cluster as a cofactor.

The protein localises to the cytoplasm. It carries out the reaction N(6)-dimethylallyladenosine(37) in tRNA + (sulfur carrier)-SH + AH2 + 2 S-adenosyl-L-methionine = 2-methylsulfanyl-N(6)-dimethylallyladenosine(37) in tRNA + (sulfur carrier)-H + 5'-deoxyadenosine + L-methionine + A + S-adenosyl-L-homocysteine + 2 H(+). In terms of biological role, catalyzes the methylthiolation of N6-(dimethylallyl)adenosine (i(6)A), leading to the formation of 2-methylthio-N6-(dimethylallyl)adenosine (ms(2)i(6)A) at position 37 in tRNAs that read codons beginning with uridine. This chain is tRNA-2-methylthio-N(6)-dimethylallyladenosine synthase, found in Nitrosomonas europaea (strain ATCC 19718 / CIP 103999 / KCTC 2705 / NBRC 14298).